The following is a 305-amino-acid chain: UDP-3-O-acyl-N-acetylglucosamine deacetylase (305 aa).

His78, His237, and Asp241 together coordinate Zn(2+). His264 serves as the catalytic Proton donor.

This sequence belongs to the LpxC family. Zn(2+) serves as cofactor.

It catalyses the reaction a UDP-3-O-[(3R)-3-hydroxyacyl]-N-acetyl-alpha-D-glucosamine + H2O = a UDP-3-O-[(3R)-3-hydroxyacyl]-alpha-D-glucosamine + acetate. It functions in the pathway glycolipid biosynthesis; lipid IV(A) biosynthesis; lipid IV(A) from (3R)-3-hydroxytetradecanoyl-[acyl-carrier-protein] and UDP-N-acetyl-alpha-D-glucosamine: step 2/6. Its function is as follows. Catalyzes the hydrolysis of UDP-3-O-myristoyl-N-acetylglucosamine to form UDP-3-O-myristoylglucosamine and acetate, the committed step in lipid A biosynthesis. The protein is UDP-3-O-acyl-N-acetylglucosamine deacetylase of Paraburkholderia xenovorans (strain LB400).